Here is a 291-residue protein sequence, read N- to C-terminus: Probable alpha-L-glutamate ligase (291 aa).

The ATP-grasp domain maps to 104–287 (HQLLASQGID…VAGTIIQHLE (184 aa)). ATP contacts are provided by residues K141, 178 to 179 (EF), D187, and 211 to 213 (RSN). Mg(2+)-binding residues include D248, E260, and N262. Residues D248, E260, and N262 each coordinate Mn(2+).

It belongs to the RimK family. Requires Mg(2+) as cofactor. Mn(2+) is required as a cofactor.

This is Probable alpha-L-glutamate ligase from Xanthomonas campestris pv. campestris (strain B100).